The sequence spans 87 residues: Putative RNase MJ1548 (87 aa).

Active-site residues include Arg65 and His70. The short motif at 65–72 (RNAIVHKY) is the RX(4)HXY motif element. Tyr72 is subject to O-di-AMP-tyrosine.

It belongs to the HepT RNase toxin family. As to quaternary structure, homodimer, probably forms a complex with cognate antitoxin MJ1547. Modified by cognate antitoxin MJ1547; probably at least 2 successive AMPylation events occur on Tyr-72.

In terms of biological role, probable toxic component of a putative type VII toxin-antitoxin (TA) system, probably an RNase. Probably neutralized by cognate antitoxin MJ1547. Neutralization may be due to AMPylation by antitoxin MJ1547. The chain is Putative RNase MJ1548 from Methanocaldococcus jannaschii (strain ATCC 43067 / DSM 2661 / JAL-1 / JCM 10045 / NBRC 100440) (Methanococcus jannaschii).